The following is a 78-amino-acid chain: Large ribosomal subunit protein bL28 (78 aa).

Residues Met-1 to Thr-25 form a disordered region.

It belongs to the bacterial ribosomal protein bL28 family.

This chain is Large ribosomal subunit protein bL28, found in Alteromonas mediterranea (strain DSM 17117 / CIP 110805 / LMG 28347 / Deep ecotype).